The chain runs to 190 residues: Outer-membrane lipoprotein LolB (190 aa).

The first 16 residues, 1-16 (MRLRFSLLLTVSLLAG), serve as a signal peptide directing secretion. The N-palmitoyl cysteine moiety is linked to residue C17. C17 carries S-diacylglycerol cysteine lipidation.

Belongs to the LolB family. In terms of assembly, monomer.

It is found in the cell outer membrane. Its function is as follows. Plays a critical role in the incorporation of lipoproteins in the outer membrane after they are released by the LolA protein. This is Outer-membrane lipoprotein LolB from Dechloromonas aromatica (strain RCB).